The chain runs to 325 residues: ADP-L-glycero-D-manno-heptose-6-epimerase (325 aa).

NADP(+) is bound by residues 10-11, 31-32, Lys-38, and 75-79; these read FI, DD, and EGACS. The active-site Proton acceptor is Tyr-139. Lys-143 is an NADP(+) binding site. Position 167 (Asn-167) interacts with substrate. 2 residues coordinate NADP(+): Val-168 and Lys-176. The active-site Proton acceptor is Lys-176. Substrate contacts are provided by residues Ser-178, His-185, 199–202, Arg-212, and Tyr-285; that span reads FEGS.

It belongs to the NAD(P)-dependent epimerase/dehydratase family. HldD subfamily. Homopentamer. It depends on NADP(+) as a cofactor.

It catalyses the reaction ADP-D-glycero-beta-D-manno-heptose = ADP-L-glycero-beta-D-manno-heptose. It functions in the pathway nucleotide-sugar biosynthesis; ADP-L-glycero-beta-D-manno-heptose biosynthesis; ADP-L-glycero-beta-D-manno-heptose from D-glycero-beta-D-manno-heptose 7-phosphate: step 4/4. Catalyzes the interconversion between ADP-D-glycero-beta-D-manno-heptose and ADP-L-glycero-beta-D-manno-heptose via an epimerization at carbon 6 of the heptose. The protein is ADP-L-glycero-D-manno-heptose-6-epimerase of Azoarcus sp. (strain BH72).